Here is a 623-residue protein sequence, read N- to C-terminus: Glutamyl-tRNA(Gln) amidotransferase subunit E (623 aa).

This sequence belongs to the GatB/GatE family. GatE subfamily. In terms of assembly, heterodimer of GatD and GatE.

It carries out the reaction L-glutamyl-tRNA(Gln) + L-glutamine + ATP + H2O = L-glutaminyl-tRNA(Gln) + L-glutamate + ADP + phosphate + H(+). In terms of biological role, allows the formation of correctly charged Gln-tRNA(Gln) through the transamidation of misacylated Glu-tRNA(Gln) in organisms which lack glutaminyl-tRNA synthetase. The reaction takes place in the presence of glutamine and ATP through an activated gamma-phospho-Glu-tRNA(Gln). The GatDE system is specific for glutamate and does not act on aspartate. This Haloarcula marismortui (strain ATCC 43049 / DSM 3752 / JCM 8966 / VKM B-1809) (Halobacterium marismortui) protein is Glutamyl-tRNA(Gln) amidotransferase subunit E.